A 427-amino-acid chain; its full sequence is MESLTLQPIARVEGTVNLPGSKSVSNRALLLAALARGTTVLTNLLDSDDVRHMLNALSALGVQYTLSADRTRCEVTGNGGPLRSAAALELFLGNAGTAMRPLAAALCLGSNDIVLTGEPRMKERPIGHLVDALRQGGAQIDCLEQENYPPLRLRGGFQGGNVEVDGSVSSQFLTALLMTAPLAPQDTVIVIKGDLVSKPYIDITLHLMKTFGVEVDNQSYQRFVVRGKQQYQSPGDYLVEGDASSASYFLAAGAIKGGTVKVTGIGRNSVQGDIRFADVLEKMGATVTWGDDFIACTHGELKAVDMDMNHIPDAAMTIATAALFAQGTTTLRNIYNWRVKETDRLFAMATELRKVGAEVEEGEDYIRITPPAKLKYAEIGTYNDHRMAMCFSLVALSDTPVTILDPKCTAKTFPDYFEQLARISTLA.

3-phosphoshikimate-binding residues include K22, S23, and R27. Residue K22 coordinates phosphoenolpyruvate. G96 and R124 together coordinate phosphoenolpyruvate. 3-phosphoshikimate-binding residues include S169, S170, Q171, S197, D313, N336, and K340. Position 171 (Q171) interacts with phosphoenolpyruvate. D313 acts as the Proton acceptor in catalysis. The phosphoenolpyruvate site is built by R344, R386, and K411.

Belongs to the EPSP synthase family. As to quaternary structure, monomer.

It is found in the cytoplasm. It carries out the reaction 3-phosphoshikimate + phosphoenolpyruvate = 5-O-(1-carboxyvinyl)-3-phosphoshikimate + phosphate. It participates in metabolic intermediate biosynthesis; chorismate biosynthesis; chorismate from D-erythrose 4-phosphate and phosphoenolpyruvate: step 6/7. Its function is as follows. Catalyzes the transfer of the enolpyruvyl moiety of phosphoenolpyruvate (PEP) to the 5-hydroxyl of shikimate-3-phosphate (S3P) to produce enolpyruvyl shikimate-3-phosphate and inorganic phosphate. The chain is 3-phosphoshikimate 1-carboxyvinyltransferase from Klebsiella pneumoniae subsp. pneumoniae (strain ATCC 700721 / MGH 78578).